The sequence spans 786 residues: Rho GTPase-activating protein 10 (786 aa).

The region spanning 7-262 (EFSDCYLDSP…IRQNPKDHKR (256 aa)) is the BAR domain. The 108-residue stretch at 265–372 (QFTAEGYLYV…WLEALGGKEA (108 aa)) folds into the PH domain. Residues 389 to 574 (AQLDKMGFTI…ILIENHEKIF (186 aa)) form the Rho-GAP domain. Disordered stretches follow at residues 576–608 (TPPDTTFPEPTCLSASPPNAPPRQSKRQGQRTK) and 621–727 (EDGD…PPES). Over residues 599 to 608 (QSKRQGQRTK) the composition is skewed to basic residues. The span at 634 to 651 (PTSSLDSLSSPSPVTTAV) shows a compositional bias: low complexity. The segment covering 676 to 688 (IPGQTRSSMVQWL) has biased composition (polar residues). Low complexity predominate over residues 689-712 (NPQSPTTTSSNSAVTPLSPGSSPF). An SH3 domain is found at 728-786 (IRSRKARAVYPCEAEHSSELSFEIGAIFEDVQTSREPGWLEGTLNGKRGLIPQNYVKLL).

As to quaternary structure, interacts with PKN3. Interacts with caspase-activated PAK2 proteolytic fragment PAK-2p34; the interaction does not affect GRAF2/ARHGAP10 GTPase activation activity towards RHOA and CDC42. Interacts via its SH3 domain with PTK2/FAK1. Interacts with PTK2B/PYK2; the interaction negatively regulates GRAF2/ARHGAP10 GTPase-activating activity. Interacts with MICAL1 and WDR44; complex formation might transit from GRAF2/ARHGAP10-MICAL1 to GRAF2/ARHGAP10-WDR44 complexes. In terms of processing, phosphorylated. Phosphorylated in vitro by constitutive active PKN3. High levels of expression in heart and skeletal muscle.

Its subcellular location is the cytoplasm. The protein localises to the perinuclear region. The protein resides in the cell membrane. It is found in the endosome membrane. GTPase-activating protein that catalyzes the conversion of active GTP-bound Rho GTPases to their inactive GDP-bound form, thus suppressing various Rho GTPase-mediated cellular processes. Also converts Cdc42 to an inactive GDP-bound state. Essential for PTKB2 regulation of cytoskeletal organization via Rho family GTPases. Inhibits PAK2 proteolytic fragment PAK-2p34 kinase activity and changes its localization from the nucleus to the perinuclear region. Stabilizes PAK-2p34 thereby increasing stimulation of cell death. Associates with MICAL1 on the endosomal membrane to promote Rab8-Rab10-dependent tubule extension. After dissociation with MICAL1, recruits WDR44 which connects the endoplasmic reticulum (ER) with the endosomal tubule, thereby participating in the export of a subset of neosynthesized proteins. The chain is Rho GTPase-activating protein 10 (ARHGAP10) from Homo sapiens (Human).